Reading from the N-terminus, the 183-residue chain is MSGNKEEEDPRIHGIKTKIRVVPDFPKKGIMFQDITTVLLDPKAFKDTIDLFVERYRDKNISVVAGIEARGFLFGPPIALAIGAKFVPLRKPKKLPGETIFEEYELEYGNDRLEMHIGAVEAGDRALVVDDLIATGGTLCAAINLLERVGAEVVECACVIELPELKGRQRLKGKPLCMLVEYR.

This sequence belongs to the purine/pyrimidine phosphoribosyltransferase family. As to quaternary structure, homodimer.

It is found in the cytoplasm. It catalyses the reaction AMP + diphosphate = 5-phospho-alpha-D-ribose 1-diphosphate + adenine. It participates in purine metabolism; AMP biosynthesis via salvage pathway; AMP from adenine: step 1/1. Catalyzes a salvage reaction resulting in the formation of AMP, that is energically less costly than de novo synthesis. May contribute to the recycling of adenine into adenylate nucleotides and the inactivation of cytokinins by phosphoribosylation. Possesses low activity toward adenine and cytokinins. In Arabidopsis thaliana (Mouse-ear cress), this protein is Adenine phosphoribosyltransferase 3 (APT3).